The chain runs to 25 residues: Dermaseptin-5.1TR (25 aa).

Valine amide is present on V25.

As to expression, expressed by the skin glands.

The protein localises to the secreted. Its function is as follows. Has antimicrobial activity. The chain is Dermaseptin-5.1TR from Phyllomedusa trinitatis (Trinidad leaf frog).